We begin with the raw amino-acid sequence, 560 residues long: Probable 2,3-bisphosphoglycerate-independent phosphoglycerate mutase 2 (560 aa).

Gly-2 carries the N-acetylglycine modification. Mn(2+) is bound by residues Asp-29 and Ser-82. Ser-82 serves as the catalytic Phosphoserine intermediate. Substrate contacts are provided by residues His-141, 171 to 172, Arg-207, Arg-214, 287 to 290, and Lys-362; these read RD and RADR. Asp-431, His-435, Asp-472, His-473, and His-502 together coordinate Mn(2+).

This sequence belongs to the BPG-independent phosphoglycerate mutase family. In terms of assembly, monomer. The cofactor is Mn(2+).

Its subcellular location is the cytoplasm. The catalysed reaction is (2R)-2-phosphoglycerate = (2R)-3-phosphoglycerate. Its pathway is carbohydrate degradation; glycolysis; pyruvate from D-glyceraldehyde 3-phosphate: step 3/5. Its function is as follows. Catalyzes the interconversion of 2-phosphoglycerate (2-PGA) and 3-phosphoglycerate (3-PGA). Required for guard cell function (e.g. blue light-, abscisic acid- (ABA), and low CO(2)-regulated stomatal movements) and fertility (e.g. pollen grains production). The protein is Probable 2,3-bisphosphoglycerate-independent phosphoglycerate mutase 2 (PGM2) of Arabidopsis thaliana (Mouse-ear cress).